The chain runs to 226 residues: Tyramine N-feruloyltransferase 4/11 (226 aa).

The tract at residues 29–45 (HIYKLFYQIHEYHNYTH) is important in binding site and for catalytic activity. One can recognise an N-acetyltransferase domain in the interval 72–222 (VLLLEVSPTP…VGDALQKYAD (151 aa)).

The protein belongs to the acetyltransferase family. As to quaternary structure, homodimer.

It localises to the cytoplasm. The enzyme catalyses tyramine + (E)-feruloyl-CoA = N-[(E)-feruloyl]tyramine + CoA + H(+). Its activity is regulated as follows. Inhibited by (2-hydroxyphenyl)amino sulfinyl acetic acid 1,1-dimethylethyl ester, by DEPC and by N-ethylmaleimide. In terms of biological role, synthesizes amides which are involved in stress response in the cell wall. Catalyzes the synthesis of hydroxycinnamic acid amides from hydroxycinnamoyl-CoA thioesters and various hydroxyphenylethylamines such as 4-coumaroyl-CoA and sinapoyl-CoA. This chain is Tyramine N-feruloyltransferase 4/11 (THT4), found in Nicotiana tabacum (Common tobacco).